The sequence spans 276 residues: Chymotrypsin (276 aa).

The first 16 residues, 1 to 16 (MKVALVVLALFGVSLA), serve as a signal peptide directing secretion. Positions 17–45 (ASIDNIEIPPSKNIYVEPINQPEVDPSLE) are cleaved as a propeptide — activation peptide. The region spanning 46–272 (IVNGQEVVPH…YLNWLQTHSE (227 aa)) is the Peptidase S1 domain. A disulfide bond links Cys-74 and Cys-90. Catalysis depends on charge relay system residues His-89 and Asp-135. N-linked (GlcNAc...) asparagine glycans are attached at residues Asn-144 and Asn-193. 2 cysteine pairs are disulfide-bonded: Cys-202–Cys-215 and Cys-225–Cys-250. The Charge relay system role is filled by Ser-229.

This sequence belongs to the peptidase S1 family. In terms of tissue distribution, expressed in larval carcasses and gut, and adult gut.

The protein resides in the secreted. It localises to the extracellular space. The enzyme catalyses Preferential cleavage: Tyr-|-Xaa, Trp-|-Xaa, Phe-|-Xaa, Leu-|-Xaa.. Functionally, serine protease with chymotryptic and collagenolytic activities. The chain is Chymotrypsin from Phaedon cochleariae (Mustard beetle).